The following is a 130-amino-acid chain: Fluoride-specific ion channel FluC (130 aa).

Helical transmembrane passes span 10–30 (FAVA…SLWF), 41–61 (GTLI…TVAM), 72–89 (LLFG…STYE), and 105–125 (LVYW…GILL). Na(+) contacts are provided by Gly-80 and Thr-83.

The protein belongs to the fluoride channel Fluc/FEX (TC 1.A.43) family.

The protein resides in the cell inner membrane. The catalysed reaction is fluoride(in) = fluoride(out). Na(+) is not transported, but it plays an essential structural role and its presence is essential for fluoride channel function. In terms of biological role, fluoride-specific ion channel. Important for reducing fluoride concentration in the cell, thus reducing its toxicity. In Synechococcus sp. (strain JA-2-3B'a(2-13)) (Cyanobacteria bacterium Yellowstone B-Prime), this protein is Fluoride-specific ion channel FluC.